Here is a 1372-residue protein sequence, read N- to C-terminus: DNA-directed RNA polymerase subunit beta (1372 aa).

This sequence belongs to the RNA polymerase beta chain family. The RNAP catalytic core consists of 2 alpha, 1 beta, 1 beta' and 1 omega subunit. When a sigma factor is associated with the core the holoenzyme is formed, which can initiate transcription.

It catalyses the reaction RNA(n) + a ribonucleoside 5'-triphosphate = RNA(n+1) + diphosphate. DNA-dependent RNA polymerase catalyzes the transcription of DNA into RNA using the four ribonucleoside triphosphates as substrates. The polypeptide is DNA-directed RNA polymerase subunit beta (Psychrobacter arcticus (strain DSM 17307 / VKM B-2377 / 273-4)).